Consider the following 142-residue polypeptide: MLKFRKRGQISLEFSLLFLGVLLAIVIAVGYPGMFGFNKTVSISSMSLAHAAVSKMKQNIELVSSADEGTMKIVYIKCPPGTWGANNNILYFYRDGNIKFNITAKCDINIILNGNKTVSTPKIIIANITKIDETHVIVTLYQ.

A propeptide spanning residues 1–8 (MLKFRKRG) is cleaved from the precursor. A QXSXEXXXL motif is present at residues 9–17 (QISLEFSLL).

In terms of processing, the N-terminus is cleaved by the prepilin peptidase EppA, which recognizes the class III signal sequence.

The protein resides in the secreted. Its subcellular location is the cell surface. The protein localises to the fimbrium. The protein is Probable pilin MJ0832.1 of Methanocaldococcus jannaschii (strain ATCC 43067 / DSM 2661 / JAL-1 / JCM 10045 / NBRC 100440) (Methanococcus jannaschii).